Reading from the N-terminus, the 316-residue chain is Ribosomal protein L11 methyltransferase (316 aa).

S-adenosyl-L-methionine-binding residues include Thr-157, Gly-178, Asp-200, and Asn-243.

The protein belongs to the methyltransferase superfamily. PrmA family.

The protein localises to the cytoplasm. It catalyses the reaction L-lysyl-[protein] + 3 S-adenosyl-L-methionine = N(6),N(6),N(6)-trimethyl-L-lysyl-[protein] + 3 S-adenosyl-L-homocysteine + 3 H(+). Its function is as follows. Methylates ribosomal protein L11. The sequence is that of Ribosomal protein L11 methyltransferase from Streptococcus pneumoniae (strain Hungary19A-6).